The following is a 42-amino-acid chain: Photosystem I reaction center subunit IX (42 aa).

The helical transmembrane segment at 7-27 (YLSTAPVLAALSLGFLAGLLI) threads the bilayer.

The protein belongs to the PsaJ family.

Its subcellular location is the plastid. The protein localises to the chloroplast thylakoid membrane. Functionally, may help in the organization of the PsaE and PsaF subunits. The sequence is that of Photosystem I reaction center subunit IX from Cryptomeria japonica (Japanese cedar).